Here is a 108-residue protein sequence, read N- to C-terminus: Small ribosomal subunit protein eS25 (108 aa).

The interval 1–36 is disordered; that stretch reads MAPKKAQAPPPSSKPAKSGGGKQKKKKWSKGKQKEK. Over residues 22 to 31 the composition is skewed to basic residues; sequence KQKKKKWSKG.

It belongs to the eukaryotic ribosomal protein eS25 family.

This chain is Small ribosomal subunit protein eS25 (RPS25), found in Solanum lycopersicum (Tomato).